The primary structure comprises 142 residues: 3-hydroxyacyl-[acyl-carrier-protein] dehydratase FabZ (142 aa).

Residue His-48 is part of the active site.

This sequence belongs to the thioester dehydratase family. FabZ subfamily.

It localises to the cytoplasm. The catalysed reaction is a (3R)-hydroxyacyl-[ACP] = a (2E)-enoyl-[ACP] + H2O. In terms of biological role, involved in unsaturated fatty acids biosynthesis. Catalyzes the dehydration of short chain beta-hydroxyacyl-ACPs and long chain saturated and unsaturated beta-hydroxyacyl-ACPs. The chain is 3-hydroxyacyl-[acyl-carrier-protein] dehydratase FabZ from Ruminiclostridium cellulolyticum (strain ATCC 35319 / DSM 5812 / JCM 6584 / H10) (Clostridium cellulolyticum).